Reading from the N-terminus, the 103-residue chain is UPF0145 protein BC_5181 (103 aa).

This sequence belongs to the UPF0145 family.

This Bacillus cereus (strain ATCC 14579 / DSM 31 / CCUG 7414 / JCM 2152 / NBRC 15305 / NCIMB 9373 / NCTC 2599 / NRRL B-3711) protein is UPF0145 protein BC_5181.